Reading from the N-terminus, the 240-residue chain is MRQSGRKSNQLRPISLELSPLINAEGSCLIKIGNTHVMCSATCETTVPPFLRGQNQGWITAEYGMIPGSTSHRIKREAALGKQGGRTQEIQRLIGRAMRCVINLQKLGERQIIIDCDVINADGGTRTAAITGSYVALHLAIRSLMKKRILKVNPLISQIAAISCGIYKGNAVLDLDYLEDSDAEVDSNFVFACNGNLIEVQGTAEKEPFSEEQFLAMLKLAKSGVVELFKLQNQVLIAAE.

Residues Arg-86 and 124 to 126 contribute to the phosphate site; that span reads GTR.

The protein belongs to the RNase PH family. In terms of assembly, homohexameric ring arranged as a trimer of dimers.

It carries out the reaction tRNA(n+1) + phosphate = tRNA(n) + a ribonucleoside 5'-diphosphate. Phosphorolytic 3'-5' exoribonuclease that plays an important role in tRNA 3'-end maturation. Removes nucleotide residues following the 3'-CCA terminus of tRNAs; can also add nucleotides to the ends of RNA molecules by using nucleoside diphosphates as substrates, but this may not be physiologically important. Probably plays a role in initiation of 16S rRNA degradation (leading to ribosome degradation) during starvation. This chain is Ribonuclease PH, found in Rickettsia prowazekii (strain Madrid E).